Consider the following 226-residue polypeptide: LexA repressor (226 aa).

A DNA-binding region (H-T-H motif) is located at residues 42-62 (MREIGDAVGLASLSSVTHQLN). Residues Ser-150 and Lys-187 each act as for autocatalytic cleavage activity in the active site.

The protein belongs to the peptidase S24 family. As to quaternary structure, homodimer.

It carries out the reaction Hydrolysis of Ala-|-Gly bond in repressor LexA.. In terms of biological role, represses a number of genes involved in the response to DNA damage (SOS response), including recA and lexA. In the presence of single-stranded DNA, RecA interacts with LexA causing an autocatalytic cleavage which disrupts the DNA-binding part of LexA, leading to derepression of the SOS regulon and eventually DNA repair. This Clavibacter sepedonicus (Clavibacter michiganensis subsp. sepedonicus) protein is LexA repressor.